A 363-amino-acid chain; its full sequence is Probable endopolygalacturonase A (363 aa).

Positions 1-20 are cleaved as a signal peptide; sequence MQLLQSSVIAATVGAALVAA. A propeptide spanning residues 21–28 is cleaved from the precursor; it reads APVELEAR. Cys31 and Cys46 form a disulfide bridge. PbH1 repeat units lie at residues 158-187, 188-209, 210-230, 239-260, 268-290, and 302-347; these read SDNL…DIGS, STYI…AINS, GSHI…SIGS, VEDV…RIKT, VSNV…VVEQ, and TNGI…SITG. N-linked (GlcNAc...) asparagine glycosylation occurs at Asn162. The active-site Proton donor is Asp202. Cys204 and Cys220 are oxidised to a cystine. His224 is an active-site residue. Disulfide bonds link Cys330-Cys335 and Cys354-Cys363.

This sequence belongs to the glycosyl hydrolase 28 family.

It is found in the secreted. The enzyme catalyses (1,4-alpha-D-galacturonosyl)n+m + H2O = (1,4-alpha-D-galacturonosyl)n + (1,4-alpha-D-galacturonosyl)m.. Involved in maceration and soft-rotting of plant tissue. Hydrolyzes the 1,4-alpha glycosidic bonds of de-esterified pectate in the smooth region of the plant cell wall. The chain is Probable endopolygalacturonase A (pgaA) from Aspergillus parasiticus.